A 211-amino-acid polypeptide reads, in one-letter code: Transcriptional regulatory protein LiaR (211 aa).

A Response regulatory domain is found at 3 to 119; that stretch reads RVLLIDDHEM…EIADAIRAAS (117 aa). Residue Asp-54 is modified to 4-aspartylphosphate. An HTH luxR-type domain is found at 143 to 208; that stretch reads NALPHESLTK…QAAVYAHRNH (66 aa). The segment at residues 167–186 is a DNA-binding region (H-T-H motif); it reads NKEIGEELFITIKTVKTHIT.

In terms of processing, phosphorylated by LiaS.

The protein localises to the cytoplasm. Functionally, member of the two-component regulatory system LiaS/LiaR probably involved in response to a subset of cell wall-active antibiotics that interfere with the lipid II cycle in the cytoplasmic membrane (bacitracin, nisin, ramoplanin and vancomycin). Also seems to be involved in response to cationic antimicrobial peptides and secretion stress. LiaR regulates the transcription of the liaIHGFSR operon. This Bacillus subtilis (strain 168) protein is Transcriptional regulatory protein LiaR (liaR).